A 65-amino-acid chain; its full sequence is Large ribosomal subunit protein uL29 (65 aa).

It belongs to the universal ribosomal protein uL29 family.

This is Large ribosomal subunit protein uL29 from Desulforamulus reducens (strain ATCC BAA-1160 / DSM 100696 / MI-1) (Desulfotomaculum reducens).